We begin with the raw amino-acid sequence, 238 residues long: Ribonuclease PH (238 aa).

Residues Arg86 and 124–126 (GTR) contribute to the phosphate site.

Belongs to the RNase PH family. In terms of assembly, homohexameric ring arranged as a trimer of dimers.

It carries out the reaction tRNA(n+1) + phosphate = tRNA(n) + a ribonucleoside 5'-diphosphate. Functionally, phosphorolytic 3'-5' exoribonuclease that plays an important role in tRNA 3'-end maturation. Removes nucleotide residues following the 3'-CCA terminus of tRNAs; can also add nucleotides to the ends of RNA molecules by using nucleoside diphosphates as substrates, but this may not be physiologically important. Probably plays a role in initiation of 16S rRNA degradation (leading to ribosome degradation) during starvation. The chain is Ribonuclease PH from Photobacterium profundum (strain SS9).